The chain runs to 329 residues: G-protein coupled receptor 3 (329 aa).

Residues 1 to 43 (MMWGAGRSMAWFSAGSGSVNVSIDPAEEPTGPATLLPSPRAWD) are Extracellular-facing. Residue asparagine 20 is glycosylated (N-linked (GlcNAc...) asparagine). A helical membrane pass occupies residues 44–64 (VVLCISGTLVSCENALVVAII). Topologically, residues 65 to 73 (VGTPAFRAP) are cytoplasmic. A helical membrane pass occupies residues 74–94 (MFLLVGSLAVADLLAGLGLVL). Over 95–108 (HFAADFCIGSPEMS) the chain is Extracellular. A helical transmembrane segment spans residues 109 to 129 (LVLVGVLATAFTASIGSLLAI). Residues 130-153 (TVDRYLSLYNALTYYSETTVTRTY) are Cytoplasmic-facing. A helical membrane pass occupies residues 154–174 (VMLALVWVGALGLGLVPVLAW). Residues 175-192 (NCRDGLTTCGVVYPLSKN) lie on the Extracellular side of the membrane. The helical transmembrane segment at 193–213 (HLVVLAIVFFMVFGIMLQLYA) threads the bilayer. Residues 214–247 (QICRIVCRHAQQIALQRHLLPASHYVATRKGIAT) are Cytoplasmic-facing. A helical membrane pass occupies residues 248–268 (LAVVLGAFAACWLPFTVYCLL). Residues 269–277 (GDANSPPLY) are Extracellular-facing. The helical transmembrane segment at 278 to 298 (TYLTLLPATYNSMINPVIYAF) threads the bilayer. Residues 299–329 (RNQDVQKVLWAICCCCSTSKIPFRSRSPSDV) lie on the Cytoplasmic side of the membrane. Residue cysteine 312 is the site of S-palmitoyl cysteine attachment. Phosphoserine is present on residues serine 323, serine 325, and serine 327.

This sequence belongs to the G-protein coupled receptor 1 family. As to expression, abundantly expressed in granule neurons at all development stages. Enriched in the longest tips of neurites during differentiation of hippocampal neurons.

Its subcellular location is the cell membrane. Its function is as follows. Constitutively active G-protein coupled receptor that maintains high 3'-5'-cyclic adenosine monophosphate (cAMP) levels that a plays a role in serveral processes including meiotic arrest in oocytes or neuronal development via activation of numerous intracellular signaling pathways. Acts as an essential activator of thermogenic adipocytes and drives thermogenesis via its intrinsic G(s)-coupling activity without the requirement of a ligand. Has a potential role in modulating a number of brain functions, including behavioral responses to stress, amyloid-beta peptide generation in neurons. Stimulates neurite outgrowth in cerebellar granular neurons modulated via PKA, ERK, and most strongly PI3K-mediated signaling pathways. This Rattus norvegicus (Rat) protein is G-protein coupled receptor 3 (Gpr3).